A 156-amino-acid polypeptide reads, in one-letter code: Endogenous retrovirus group K member 19 Pro protein (156 aa).

A Peptidase A2 domain is found at 21 to 96; the sequence is FEGLVDTGAD…IPLNLWGRDL (76 aa). The active site involves Asp-26. Residues 111 to 156 form the G-patch domain; that stretch reads YSPTSQKIMTKMGYILGKGLGKNEDGIKIPVEAKINQKREGIGYPF.

Belongs to the peptidase A2 family. HERV class-II K(HML-2) subfamily. Active as a homodimer. Post-translationally, autoproteolytically processed at the N-terminus. Expected C-terminal autoprocessing not detected. The sequence shown is that of the processed Pro protein.

It catalyses the reaction Processing at the authentic HIV-1 PR recognition site and release of the mature p17 matrix and the p24 capsid protein, as a result of the cleavage of the -SQNY-|-PIVQ- cleavage site.. Retroviral proteases have roles in the processing of the primary translation products and the maturation of the viral particle. Endogenous Pro proteins may have kept, lost or modified their original function during evolution. This is Endogenous retrovirus group K member 19 Pro protein (ERVK-19) from Homo sapiens (Human).